The following is a 112-amino-acid chain: MKEMTGLHSLVSIENFIKQHKFSFIYISRPGCTVCHAVLPQLRIVLDQFPNIKLGHINADDVAEVAGRFSVFTVPVLLLFIDGTEFLREARFVHFEQLEQKLKRVYRLYEGE.

Residues 1–107 enclose the Thioredoxin domain; sequence MKEMTGLHSL…LEQKLKRVYR (107 aa). An intrachain disulfide couples C32 to C35.

The sequence is that of Thioredoxin-like protein YdfQ (ydfQ) from Bacillus subtilis (strain 168).